The chain runs to 145 residues: 3-hydroxyacyl-[acyl-carrier-protein] dehydratase FabZ (145 aa).

H47 is a catalytic residue.

The protein belongs to the thioester dehydratase family. FabZ subfamily.

It is found in the cytoplasm. The enzyme catalyses a (3R)-hydroxyacyl-[ACP] = a (2E)-enoyl-[ACP] + H2O. In terms of biological role, involved in unsaturated fatty acids biosynthesis. Catalyzes the dehydration of short chain beta-hydroxyacyl-ACPs and long chain saturated and unsaturated beta-hydroxyacyl-ACPs. This Methylobacillus flagellatus (strain ATCC 51484 / DSM 6875 / VKM B-1610 / KT) protein is 3-hydroxyacyl-[acyl-carrier-protein] dehydratase FabZ.